Here is a 319-residue protein sequence, read N- to C-terminus: GTP cyclohydrolase MptA (319 aa).

It belongs to the GTP cyclohydrolase IV family. In terms of assembly, homodimer. Fe(2+) serves as cofactor.

The catalysed reaction is GTP + H2O = 7,8-dihydroneopterin 2',3'-cyclic phosphate + formate + diphosphate + H(+). It participates in cofactor biosynthesis; 5,6,7,8-tetrahydromethanopterin biosynthesis. In terms of biological role, converts GTP to 7,8-dihydro-D-neopterin 2',3'-cyclic phosphate, the first intermediate in the biosynthesis of coenzyme methanopterin. This is GTP cyclohydrolase MptA from Methanosarcina barkeri (strain Fusaro / DSM 804).